The following is a 901-amino-acid chain: HTH-type transcriptional regulator MalT (901 aa).

ATP is bound at residue 39 to 46 (SPAGYGKT). The 66-residue stretch at 829–894 (ELIRTSPLTQ…DAVQHAQQLL (66 aa)) folds into the HTH luxR-type domain. Residues 853 to 872 (NEQIAGELDVAATTIKTHIR) constitute a DNA-binding region (H-T-H motif).

The protein belongs to the MalT family. In terms of assembly, monomer in solution. Oligomerizes to an active state in the presence of the positive effectors ATP and maltotriose.

Its activity is regulated as follows. Activated by ATP and maltotriose, which are both required for DNA binding. In terms of biological role, positively regulates the transcription of the maltose regulon whose gene products are responsible for uptake and catabolism of malto-oligosaccharides. Specifically binds to the promoter region of its target genes, recognizing a short DNA motif called the MalT box. This Klebsiella pneumoniae subsp. pneumoniae (strain ATCC 700721 / MGH 78578) protein is HTH-type transcriptional regulator MalT.